Here is a 418-residue protein sequence, read N- to C-terminus: Glutamyl-tRNA reductase (418 aa).

Substrate is bound by residues 49–52 (TCNR), Ser109, 114–116 (EPQ), and Gln120. Cys50 serves as the catalytic Nucleophile. Residue 189–194 (GAGETI) participates in NADP(+) binding.

The protein belongs to the glutamyl-tRNA reductase family. In terms of assembly, homodimer.

The catalysed reaction is (S)-4-amino-5-oxopentanoate + tRNA(Glu) + NADP(+) = L-glutamyl-tRNA(Glu) + NADPH + H(+). It participates in porphyrin-containing compound metabolism; protoporphyrin-IX biosynthesis; 5-aminolevulinate from L-glutamyl-tRNA(Glu): step 1/2. In terms of biological role, catalyzes the NADPH-dependent reduction of glutamyl-tRNA(Glu) to glutamate 1-semialdehyde (GSA). The polypeptide is Glutamyl-tRNA reductase (Escherichia coli O9:H4 (strain HS)).